Here is a 357-residue protein sequence, read N- to C-terminus: Protein Wnt-9b (357 aa).

An N-terminal signal peptide occupies residues 1-22 (MRPPPALALAGLCLLALPAAAA). Disulfide bonds link cysteine 89-cysteine 100, cysteine 135-cysteine 143, cysteine 145-cysteine 162, cysteine 210-cysteine 224, cysteine 212-cysteine 219, cysteine 291-cysteine 316, cysteine 305-cysteine 311, cysteine 315-cysteine 355, cysteine 331-cysteine 346, cysteine 333-cysteine 343, and cysteine 338-cysteine 339. Asparagine 99 carries N-linked (GlcNAc...) asparagine glycosylation. Residue serine 216 is the site of O-palmitoleoyl serine; by PORCN attachment.

The protein belongs to the Wnt family. As to quaternary structure, forms a soluble 1:1 complex with AFM; this prevents oligomerization and is required for prolonged biological activity. The complex with AFM may represent the physiological form in body fluids. Component of the Wnt-Fzd-LRP5-LRP6 signaling complex that contains a WNT protein, a FZD protein and LRP5 or LRP6. Interacts directly in the complex with LRP6. Interacts with PKD1 (via extracellular domain). Post-translationally, palmitoleoylation is required for efficient binding to frizzled receptors. Depalmitoleoylation leads to Wnt signaling pathway inhibition. In terms of tissue distribution, moderately expressed in fetal kidney and adult kidney. Also found in brain.

Its subcellular location is the secreted. It localises to the extracellular space. It is found in the extracellular matrix. Functionally, ligand for members of the frizzled family of seven transmembrane receptors. Functions in the canonical Wnt/beta-catenin signaling pathway. Required for normal embryonic kidney development, and for normal development of the urogenital tract, including uterus and part of the oviduct and the upper vagina in females, and epididymis and vas deferens in males. Activates a signaling cascade in the metanephric mesenchyme that induces tubulogenesis. Acts upstream of WNT4 in the signaling pathways that mediate development of kidney tubules and the Muellerian ducts. Plays a role in cranofacial development and is required for normal fusion of the palate during embryonic development. The polypeptide is Protein Wnt-9b (WNT9B) (Homo sapiens (Human)).